The following is a 111-amino-acid chain: Universal stress protein B (111 aa).

Helical transmembrane passes span 1–21 (MINT…NMLR) and 90–110 (FILT…LMLW).

This sequence belongs to the universal stress protein B family.

The protein resides in the cell inner membrane. The sequence is that of Universal stress protein B from Edwardsiella ictaluri (strain 93-146).